A 955-amino-acid polypeptide reads, in one-letter code: Leucine--tRNA ligase (955 aa).

Positions 51 to 61 (PYLNGVLHAGH) match the 'HIGH' region motif. The short motif at 647–651 (KLSKS) is the 'KMSKS' region element. Lysine 650 is an ATP binding site.

It belongs to the class-I aminoacyl-tRNA synthetase family.

Its subcellular location is the cytoplasm. The enzyme catalyses tRNA(Leu) + L-leucine + ATP = L-leucyl-tRNA(Leu) + AMP + diphosphate. This is Leucine--tRNA ligase from Methanococcus maripaludis (strain C7 / ATCC BAA-1331).